Here is a 438-residue protein sequence, read N- to C-terminus: Ammonium transporter Rh type A (438 aa).

At 1–4 (MRFK) the chain is on the cytoplasmic side. The chain crosses the membrane as a helical span at residues 5–25 (FPLMAISLEVAMIVLFGLFVE). Residues 26–61 (YETPQNASQKNASHQNASQQGNTSSSAKKDQFFQLY) are Extracellular-facing. N31, N36, N41, and N47 each carry an N-linked (GlcNAc...) asparagine glycan. The chain crosses the membrane as a helical span at residues 62-82 (PLFQDVHVMIFVGFGFLMTFL). At 83–86 (KKYG) the chain is on the cytoplasmic side. Residues 87 to 107 (FSGVGFNLFLAALGLQWGTIM) traverse the membrane as a helical segment. The Extracellular segment spans residues 108–121 (QGLLHSHGKEFHFG). Residues 122-142 (IYNMINADFSTATVLISFGAV) form a helical membrane-spanning segment. Topologically, residues 143–148 (LGKTSP) are cytoplasmic. Residues 149 to 169 (IQMLIMTILEIAVFAGNEYLV) traverse the membrane as a helical segment. Residues 170–178 (TELFEASDT) are Extracellular-facing. The helical transmembrane segment at 179-199 (GASMTIHAFGAYFGLAVAGVL) threads the bilayer. Residues 200 to 218 (YRPGLRCEHPNDESVYHSD) are Cytoplasmic-facing. Residues 219–239 (LFAMIGTLFLWIFWPSFNSAI) form a helical membrane-spanning segment. The Extracellular segment spans residues 240-249 (ADPGDHQYRA). Residues 250-270 (IVNTYMSLAACVITAYALSSL) form a helical membrane-spanning segment. Residues 271 to 278 (VERRGRLD) are Cytoplasmic-facing. The helical transmembrane segment at 279-296 (MVHIQNATLAGGVAVGTC) threads the bilayer. Topologically, residues 297–300 (ADME) are extracellular. The helical transmembrane segment at 301–321 (IPLYAAMTIGSIAGIISVLGY) threads the bilayer. At 322–342 (KFFSPLLANKLMIHDTCGVHN) the chain is on the cytoplasmic side. Residues 343–363 (LHGLPGVFGGLASIVAISWGM) traverse the membrane as a helical segment. Over 364-372 (STASMAMQA) the chain is Extracellular. Residues 373–393 (AALGSSIGSAIVGGLLTGLIL) traverse the membrane as a helical segment. Residues 394–438 (KLPIWNQPPDEYCYDDSVSWKVPKFRELDNRFFQHANHNHVEHEV) are Cytoplasmic-facing.

This sequence belongs to the ammonium transporter (TC 2.A.49) family. Rh subfamily. In terms of assembly, homodimer. Heterotrimer; a RHCE monomer interacts with a RHAG homodimer. Component of the ankyrin-1 complex in the erythrocyte, composed of ANK1, RHCE, RHAG, SLC4A1, EPB42, GYPA, GYPB and AQP1. Interacts with GYPB (via the N-terminal); this interaction bridges the (RHAG)2(RHCE) heterotrimer with the SLC4A1 Band 3 I dimer complexed with GYPA. In terms of processing, glycosylated.

The protein resides in the membrane. It carries out the reaction methylamine(out) = methylamine(in). It catalyses the reaction NH4(+)(in) = NH4(+)(out). The enzyme catalyses CO2(out) = CO2(in). In terms of biological role, component of the ankyrin-1 complex, a multiprotein complex involved in the stability and shape of the erythrocyte membrane. Heterotrimer with RHCE (RHAG)2(RHCE), that transports ammonium and its related derivative methylammonium, in both neutral and ionic forms, across the erythrocyte membrane. The transport of NH4(+) is electrogenic and masks the NH3 transport. Also, may act as a CO2 channel. Moreover in erythrocyte, regulates RHD membrane expression and is associated with rhesus blood group antigen expression. This chain is Ammonium transporter Rh type A, found in Mus musculus (Mouse).